The chain runs to 620 residues: MASDSMSSKQARNHITKGKRQQQHQQIKNRSSISDGDGEDSFIFEANEAWKDFHGSLLRFYENGELCDVTLKVGSKLISCHKLVLACVIPYFRAMFLSEMAEAKQTLIEIRDFDGDAIEDLVKFVYSSRLTLTVDNVQPLLYAACILQVELVARACCEYMKLHFHPSNCLAVRAFAESHNRIDLMDMADQYACDHFTEVVECEDFVSVSPQHLHKLLSSSDLNIENEKQVYNAAIKWLLANPQHHSKWLDETLAQVRLPLLPVDFLMGVVAKEQIVKQNLKCRDLLDEARNYHLHLSSRAVPDFEYSIRTTPRKHTAGVLFCVGGRGGSGDPFRSIECYSINKNSWFFGPEMNSRRRHVGVISVEGKVYAVGGHDGNEHLGSMEMFDPLTNKWMMKASMNTKRRGIALASLGGPIYAIGGLDDNTCFNDVERYDIESDQWSTVAPMNTPRGGVGSVALVNHVYAVGGNDGMASLSSVERYDPHLDKWIEVKEMGQRRAGNGVSKLHGCLYVVGGFDDNSPLSSVERYDPRSNKWDYVAALTTPRGGVGIATVMGKIFAVGGHNGNAYLNTVEAFDPVLNRWELVGSVSHCRAGAGVAVCSCLTSQIRDVGHGSNNVVDCM.

Residues 1 to 10 show a composition bias toward polar residues; it reads MASDSMSSKQ. The disordered stretch occupies residues 1–35; it reads MASDSMSSKQARNHITKGKRQQQHQQIKNRSSISD. Position 2 is an N-acetylalanine (alanine 2). A compositionally biased stretch (basic residues) spans 11-22; that stretch reads ARNHITKGKRQQ. Polar residues predominate over residues 23 to 34; sequence QHQQIKNRSSIS. Residues 67-134 enclose the BTB domain; sequence CDVTLKVGSK…VYSSRLTLTV (68 aa). Residues 169–270 enclose the BACK domain; the sequence is CLAVRAFAES…LPVDFLMGVV (102 aa). 6 Kelch repeats span residues 319 to 366, 367 to 413, 415 to 460, 462 to 507, 508 to 554, and 556 to 601; these read VLFC…SVEG, KVYA…SLGG, IYAI…ALVN, VYAV…KLHG, CLYV…TVMG, and IFAV…VCSC.

In terms of assembly, component of the BCR(KLHL8) E3 ubiquitin ligase complex, at least composed of CUL3, KLHL8 and RBX1. Interacts with RAPSN.

It functions in the pathway protein modification; protein ubiquitination. Its function is as follows. Substrate-specific adapter of a BCR (BTB-CUL3-RBX1) E3 ubiquitin ligase complex required for The BCR(KLHL8) ubiquitin ligase complex mediates ubiquitination and degradation of RAPSN. The protein is Kelch-like protein 8 (KLHL8) of Homo sapiens (Human).